The sequence spans 312 residues: Ribosomal RNA small subunit methyltransferase H (312 aa).

S-adenosyl-L-methionine is bound by residues 33-35 (GGH), aspartate 52, phenylalanine 81, aspartate 102, and glutamine 109.

The protein belongs to the methyltransferase superfamily. RsmH family.

The protein localises to the cytoplasm. It carries out the reaction cytidine(1402) in 16S rRNA + S-adenosyl-L-methionine = N(4)-methylcytidine(1402) in 16S rRNA + S-adenosyl-L-homocysteine + H(+). Functionally, specifically methylates the N4 position of cytidine in position 1402 (C1402) of 16S rRNA. In Leuconostoc mesenteroides subsp. mesenteroides (strain ATCC 8293 / DSM 20343 / BCRC 11652 / CCM 1803 / JCM 6124 / NCDO 523 / NBRC 100496 / NCIMB 8023 / NCTC 12954 / NRRL B-1118 / 37Y), this protein is Ribosomal RNA small subunit methyltransferase H.